Here is a 1593-residue protein sequence, read N- to C-terminus: Nischarin (1593 aa).

A necessary for binding to phosphoinositide-3-P; not sufficient for targeting to endosomes region spans residues 1 to 134 (MAAATLSFGP…GVTAALAEEL (134 aa)). A PX domain is found at 12 to 122 (REAEPAKEAR…AHFLHFHLYE (111 aa)). The segment at 121–695 (YEVNGVTAAL…ERLALEWALG (575 aa)) is necessary for homooligomerization and targeting to endosomes. The interaction with PAK1 stretch occupies residues 246 to 869 (MSVRFSATSM…LVYSDKRMVQ (624 aa)). LRR repeat units lie at residues 290-311 (ALTT…VKLI), 313-334 (KIEY…QHLY), 335-356 (NLVH…HTKL), 358-379 (NVKT…HKLY), 380-401 (SLVN…KSIG), and 405-426 (CLER…RTKV). Over residues 466–480 (SKLSNTEKKAGEDFR) the composition is skewed to basic and acidic residues. Residues 466–499 (SKLSNTEKKAGEDFRLPPAPCIRPGGSPPAAPAS) form a disordered region. Pro residues predominate over residues 482 to 496 (PPAPCIRPGGSPPAA). Phosphoserine is present on residues Ser-543, Ser-545, and Ser-548. A coiled-coil region spans residues 624 to 694 (IEAANQREEA…EERLALEWAL (71 aa)). The disordered stretch occupies residues 629–687 (QREEAHGEQGEEEEEEEEEEDVAENRYFEMGPPDAEEEEGSGQGEEDEEDEDEEAEEER). Acidic residues-rich tracts occupy residues 638–650 (GEEE…EEDV) and 662–685 (DAEE…EAEE). The interval 661–869 (PDAEEEEGSG…LVYSDKRMVQ (209 aa)) is interaction with LIMK. The interval 709–807 (KVLWCFLIHV…ANLHEFHADL (99 aa)) is interaction with ITGA5. The segment at 1016–1185 (NPSAKPRNQP…PAGGPAPAEA (170 aa)) is disordered. Composition is skewed to low complexity over residues 1038 to 1069 (ETPA…LAPV) and 1081 to 1158 (AEAP…APAP). 10 consecutive repeat copies span residues 1081–1086 (AEAPAA), 1087–1092 (AEAPAA), 1093–1098 (AEAPAA), 1099–1104 (AEAPAA), 1105–1110 (AEAPAA), 1111–1116 (AEAPAA), 1123–1128 (AEAPAA), 1129–1134 (AEAPAA), 1135–1140 (AEAPAA), and 1141–1146 (AEAPAA). The 10 X 6 AA tandem repeat of A-E-A-P-A-A stretch occupies residues 1081–1146 (AEAPAAAEAP…APAAAEAPAA (66 aa)). Over residues 1159–1179 (NQAPAPARGPAPARGPAPAGG) the composition is skewed to pro residues. At Thr-1371 the chain carries Phosphothreonine. A Phosphoserine modification is found at Ser-1373.

As to quaternary structure, homooligomer. Interacts with GRB2. Interacts with PIK3R1; probably associates with the PI3-kinase complex. Interacts with IRS4. Found in a complex with ITGA5 and PAK1. Found in a complex with LIMK1 and PAK1. Interacts with ITGA5 (via cytoplasmic domain); this interaction is direct. Interacts with PAK1 (via kinase domain); this interaction is direct and is increased upon activation of PAK1. Interacts with LIMK1 (via PDZ and kinase domain); this interaction is direct. Interacts with LIMK2; this interaction depends on LIMK2 activity. Interacts with RAC1 (activated state). Interacts with STK11; this interaction may increase STK11 activity. In terms of tissue distribution, highly expressed in brain and kidney. Moderately expressed in heart, liver, lung and skeletal muscle. Not detected in spleen and testis.

Its subcellular location is the cell membrane. It is found in the cytoplasm. The protein resides in the early endosome. It localises to the recycling endosome. Functionally, acts either as the functional imidazoline-1 receptor (I1R) candidate or as a membrane-associated mediator of the I1R signaling. Binds numerous imidazoline ligands that induces initiation of cell-signaling cascades triggering to cell survival, growth and migration. Its activation by the agonist rilmenidine induces an increase in phosphorylation of mitogen-activated protein kinases MAPK1 and MAPK3 in rostral ventrolateral medulla (RVLM) neurons that exhibited rilmenidine-evoked hypotension. Blocking its activation with efaroxan abolished rilmenidine-induced mitogen-activated protein kinase phosphorylation in RVLM neurons. Acts as a modulator of Rac-regulated signal transduction pathways. Suppresses Rac1-stimulated cell migration by interacting with PAK1 and inhibiting its kinase activity. Also blocks Pak-independent Rac signaling by interacting with RAC1 and inhibiting Rac1-stimulated NF-kB response element and cyclin D1 promoter activation. Also inhibits LIMK1 kinase activity by reducing LIMK1 'Tyr-508' phosphorylation. Inhibits Rac-induced cell migration and invasion in breast and colon epithelial cells. Inhibits lamellipodia formation, when overexpressed. Plays a role in protection against apoptosis. Involved in association with IRS4 in the enhancement of insulin activation of MAPK1 and MAPK3. When overexpressed, induces a redistribution of cell surface ITGA5 integrin to intracellular endosomal structures. In Mus musculus (Mouse), this protein is Nischarin (Nisch).